The following is a 681-amino-acid chain: Cryptochrome-1 (681 aa).

The interval 1-489 is CNT1, binds chromophores to sense blue light and mediate CRY dimerization; the sequence is MSGSVSGCGS…AKARLHEALS (489 aa). Positions 12-141 constitute a Photolyase/cryptochrome alpha/beta domain; sequence GCSIVWFRRD…AVRSFNADLL (130 aa). A disulfide bridge connects residues Cys-80 and Cys-190. Tyr-235 contributes to the FAD binding site. Asn-238 contacts Mg(2+). Residue Arg-239 coordinates ATP. Residues Lys-241, Ser-244, and Thr-246 each contribute to the Mg(2+) site. Residues 247–251 and Ser-293 each bind FAD; that span reads TSFLS. His-358 lines the Mg(2+) pocket. FAD contacts are provided by residues Asp-359 and 390–392; that span reads DAD. 359 to 360 serves as a coordination point for ATP; sequence DR. An ATP-binding site is contributed by Asp-409. A CCT1/CCE1, mediates blue light signaling region spans residues 490–681; that stretch reads QMWQLEAASR…LNWRRLSQTG (192 aa). Disordered regions lie at residues 525-598 and 616-664; these read RDIT…EPAS and STED…TSSY. Over residues 583-598 the composition is skewed to polar residues; it reads MVNTNQAQQRRAEPAS. The residue at position 616 (Ser-616) is a Phosphoserine. At Thr-621 the chain carries Phosphothreonine.

It belongs to the DNA photolyase class-1 family. As to quaternary structure, homodimer. Interacts with ADO1, COP1 and PHYA. Interacts specifically with the dark/far-red (Pr) state of PHYB, but not with the red light-activated (Pfr). Interacts with PIF4 and PIF5 in the nucleus in response to low blue light (LBL). Binds to SPA1 and SPA4 in response to blue light, this interaction prevents SPA1/COP1 complex formation and thus avoid COP1-dependent degradation of the transcription factor HY5 by the proteasome and promotes hypocotyl elongation. Interacts with TCP2. Binding to ATP mediates conformational changes which facilitate flavin binding. The cofactor is FAD. It depends on (6R)-5,10-methylene-5,6,7,8-tetrahydrofolate as a cofactor. Post-translationally, autophosphorylated; in response to blue light and when in complex with FAD cofactor. Kinase activity is optimal in the presence of magnesium ions, about 30 percent of the optimal activity in the presence of manganese ions, but inactive with calcium ions. Adopts an open conformation when phosphorylated upon photoexcitation and thus interacts with signaling partner proteins. In terms of tissue distribution, widely expressed. Expressed in the aerial tissues (e.g. cotyledons and leaf primordia), but not detected in the roots.

It localises to the cytoplasm. It is found in the nucleus. The protein resides in the PML body. With respect to regulation, light exposure induces a conformational change in the C-terminal domain CCT1 required for activity. Its function is as follows. Photoreceptor that mediates primarily blue light inhibition of hypocotyl elongation and photoperiodic control of floral initiation, and regulates other light responses, including circadian rhythms, tropic growth, stomata opening, guard cell development, root development, bacterial and viral pathogen responses, abiotic stress responses, cell cycles, programmed cell death, apical dominance, fruit and ovule development, seed dormancy, and magnetoreception. Photoexcited cryptochromes interact with signaling partner proteins to alter gene expression at both transcriptional and post-translational levels and, consequently, regulate the corresponding metabolic and developmental programs. Blue-light absorbing flavoprotein that activates reversible flavin photoreduction via an electron transport chain comprising a tryptophan triad (W-324, W-377 and W-400), accompanied by a large conformational change upon photoexcitation, or via an alternative electron transport that involves small metabolites, including NADPH, NADH, and ATP. The half-life of the activated signaling state is about 5 minutes. Also involved in the detection of blue/green ratio in light (shade under leaf canopies) and subsequent adaptations on plant growth and development. In darkness, the dark reoxidation of flavin occurs and leads to inactivated state. Perceives low blue light (LBL) and responds by directly contacting two bHLH transcription factors, PIF4 and PIF5, at chromatin on E-box variant 5'-CA[CT]GTG-3' to promote their activity and stimulate specific gene expression to adapt global physiology (e.g. hypocotyl elongation and hyponastic growth in low blue light). When activated by high-intensity blue light, catalyzes direct enzymatic conversion of molecular oxygen O(2) to reactive oxygen species (ROS) and hydrogen peroxide H(2)O(2) in vitro. ROS accumulation upon activation by blue light leads to cell death in protoplasts. Seems essential for blue-light-triggered and singlet oxygen-mediated programmed cell death (PCD). Required for the induction of nuclear genes encoding photoprotective components by GATA24 and GATA28 in extreme light intensities that exceed the electron utilization capacity of the chloroplast. Involved in shortening the circadian clock period, especially at 27 degrees Celsius, in blue light (BL) and required to maintain clock genes expression rhythm. Mediates blue light-induced gene expression and hypocotyl elongation through the inhibition of COP1-mediated degradation of the transcription factors BIT1 and HY5 and via the activation of anion channels at the plasma membrane, probably via auxin signaling. Required for the hypocotyl hook formation in darkness. Involved in blue light-dependent stomatal opening, CHS gene expression, transpiration, inhibition of stem growth and increase of root growth, probably by regulating abscisic acid (ABA). Prevents lateral roots growth by inhibiting auxin transport. Necessary for shade avoidance syndrome (SAS), characterized by leaf hyponasty and reduced lamina/petiole ratio, when exposed to blue light attenuation. Together with phototropins, involved in phototropism regulation by various blue light fluence; blue light attenuates phototropism in high fluence rates (100 umol.m-2.s-1) but enhances phototropism in low fluence rates (&lt;1.0 umol.m-2.s-1). Required for blue/UV-A wavelengths-mediated inhibition of explants shoot regeneration in vitro (e.g. new shoot apical meristems regeneration from excised cotyledons). Modulates anthocyanin accumulation in a PHYA-dependent manner in far-red-light. Acts as a PHYA/PHYB-dependent modulator of chlorophyll accumulation in red light. Contributes to most blue light deetiolation responses. May act as a chemical magnetoreceptor, via magnetically sensitive kinetics and quantum yields of photo-induced flavin / tryptophan radical pairs. The effect of near-null magnetic field on flowering is altered by changes of blue light cycle and intensity in a CRY1/CRY2-dependent manner. Involved in the strigolactone signaling that regulates hypocotyl growth in response to blue light. Modulates temperature-dependent growth and physiology maintenance, especially at warm ambient temperatures (e.g. 27 degrees Celsius) and in white light and low-light conditions, via HFR1-dependent activity; this process requires PTAC12/HMR/PAP5 (transcriptional transactivator). Implicated in promoting R protein-mediated resistance to Pseudomonas syringae pv. tomato (Pst.) DC3000 under continuous light conditions. Promotes systemic acquired resistance (SAR) and PR gene expression triggered by P.syringae. In Arabidopsis thaliana (Mouse-ear cress), this protein is Cryptochrome-1.